We begin with the raw amino-acid sequence, 149 residues long: MQVILLDKVANLGSLGDQVNVKAGYARNFLVPQGKAVPATKKNVEFFEARRAELEAKLADVLSAAEARAAQINALESVTIASKAGDEGKLFGSIGTRDIADAVTAAGVKVAKSEVRLPNGVLRNVGEHEVDFQVHSEVFAKVIINVVAE.

The protein belongs to the bacterial ribosomal protein bL9 family.

Binds to the 23S rRNA. This chain is Large ribosomal subunit protein bL9, found in Klebsiella pneumoniae (strain 342).